Here is a 254-residue protein sequence, read N- to C-terminus: Probable phosphoglycerate mutase 4 (254 aa).

Substrate contacts are provided by residues 10 to 17 (RHGESTWN) and 23 to 24 (SC). H11 (tele-phosphohistidine intermediate) is an active-site residue. S14 and S23 each carry phosphoserine. At Y26 the chain carries Phosphotyrosine. S31 carries the post-translational modification Phosphoserine. Residues R62, 89 to 92 (ERHY), and K100 each bind substrate. E89 (proton donor/acceptor) is an active-site residue. Position 106 is an N6-acetyllysine (K106). Residue 116 to 117 (RR) participates in substrate binding. A Phosphoserine modification is found at S118. 187–188 (GN) serves as a coordination point for substrate. N6-acetyllysine; alternate is present on K251. K251 is modified (N6-succinyllysine; alternate). K253 and K254 each carry N6-acetyllysine.

The protein belongs to the phosphoglycerate mutase family. BPG-dependent PGAM subfamily.

The enzyme catalyses (2R)-2-phosphoglycerate = (2R)-3-phosphoglycerate. It carries out the reaction (2R)-3-phospho-glyceroyl phosphate = (2R)-2,3-bisphosphoglycerate + H(+). This chain is Probable phosphoglycerate mutase 4 (PGAM4), found in Pan troglodytes (Chimpanzee).